Consider the following 174-residue polypeptide: FAD synthase (174 aa).

ATP contacts are provided by residues threonine 34–phenylalanine 35, histidine 39–histidine 42, aspartate 119, and tyrosine 147.

The protein belongs to the archaeal FAD synthase family. In terms of assembly, homodimer. A divalent metal cation is required as a cofactor.

The catalysed reaction is FMN + ATP + H(+) = FAD + diphosphate. Its pathway is cofactor biosynthesis; FAD biosynthesis; FAD from FMN: step 1/1. Its function is as follows. Catalyzes the transfer of the AMP portion of ATP to flavin mononucleotide (FMN) to produce flavin adenine dinucleotide (FAD) coenzyme. This is FAD synthase from Methanococcus voltae (strain ATCC BAA-1334 / A3).